A 219-amino-acid polypeptide reads, in one-letter code: VQ motif-containing protein 19 (219 aa).

The VQ signature appears at 47 to 56 (FKQVVQMLTG). Residues 52–94 (QMLTGSSSPRSPDSPRPPTTPSGKGNFVIPPIKTAQPKKHSGN) are disordered. Phosphoserine is present on residues Ser59, Ser65, Ser127, Ser131, Ser139, Ser141, and Ser152. Thr155 is modified (phosphothreonine). Disordered stretches follow at residues 156-177 (PLKQ…PLSE) and 190-219 (HRSP…SPEM). Phosphoserine is present on residues Ser192 and Ser195. Residues Thr196 and Thr211 each carry the phosphothreonine modification. Ser212 and Ser216 each carry phosphoserine.

Phosphorylated on serine and threonine residues by MPK6.

The protein resides in the nucleus. Functionally, may modulate WRKY transcription factor activities. This chain is VQ motif-containing protein 19, found in Arabidopsis thaliana (Mouse-ear cress).